Consider the following 123-residue polypeptide: Ribosome-binding factor A (123 aa).

Belongs to the RbfA family. In terms of assembly, monomer. Binds 30S ribosomal subunits, but not 50S ribosomal subunits or 70S ribosomes.

The protein localises to the cytoplasm. One of several proteins that assist in the late maturation steps of the functional core of the 30S ribosomal subunit. Associates with free 30S ribosomal subunits (but not with 30S subunits that are part of 70S ribosomes or polysomes). Required for efficient processing of 16S rRNA. May interact with the 5'-terminal helix region of 16S rRNA. This chain is Ribosome-binding factor A, found in Lactobacillus johnsonii (strain CNCM I-12250 / La1 / NCC 533).